Here is a 346-residue protein sequence, read N- to C-terminus: D-erythrose-4-phosphate dehydrogenase (346 aa).

Residue 11–12 coordinates NAD(+); sequence RI. Residues 163 to 165, R209, 222 to 223, and R245 contribute to the substrate site; these read SCT and TK. The active-site Nucleophile is C164. N327 lines the NAD(+) pocket.

It belongs to the glyceraldehyde-3-phosphate dehydrogenase family. Epd subfamily. In terms of assembly, homotetramer.

Its subcellular location is the cytoplasm. It catalyses the reaction D-erythrose 4-phosphate + NAD(+) + H2O = 4-phospho-D-erythronate + NADH + 2 H(+). It participates in cofactor biosynthesis; pyridoxine 5'-phosphate biosynthesis; pyridoxine 5'-phosphate from D-erythrose 4-phosphate: step 1/5. In terms of biological role, catalyzes the NAD-dependent conversion of D-erythrose 4-phosphate to 4-phosphoerythronate. The protein is D-erythrose-4-phosphate dehydrogenase of Vibrio vulnificus (strain YJ016).